The sequence spans 491 residues: Glutamyl-tRNA(Gln) amidotransferase subunit A (491 aa).

Catalysis depends on charge relay system residues Lys77 and Ser152. Ser176 functions as the Acyl-ester intermediate in the catalytic mechanism.

The protein belongs to the amidase family. GatA subfamily. In terms of assembly, heterotrimer of A, B and C subunits.

The enzyme catalyses L-glutamyl-tRNA(Gln) + L-glutamine + ATP + H2O = L-glutaminyl-tRNA(Gln) + L-glutamate + ADP + phosphate + H(+). Its function is as follows. Allows the formation of correctly charged Gln-tRNA(Gln) through the transamidation of misacylated Glu-tRNA(Gln) in organisms which lack glutaminyl-tRNA synthetase. The reaction takes place in the presence of glutamine and ATP through an activated gamma-phospho-Glu-tRNA(Gln). The protein is Glutamyl-tRNA(Gln) amidotransferase subunit A of Chlamydia felis (strain Fe/C-56) (Chlamydophila felis).